The primary structure comprises 553 residues: Transcription factor GAMYB (553 aa).

A compositionally biased stretch (basic and acidic residues) spans 1–17 (MYRVKSESDCEMIHQEQ). The interval 1–45 (MYRVKSESDCEMIHQEQMDSPVADDGSSGGSPHRGGGPPLKKGPW) is disordered. A compositionally biased stretch (gly residues) spans 27–38 (SSGGSPHRGGGP). HTH myb-type domains lie at 37 to 89 (GPPL…ANHL) and 90 to 144 (RPNL…KRCQ). 2 consecutive DNA-binding regions (H-T-H motif) follow at residues 65 to 89 (WNAV…ANHL) and 117 to 140 (WARM…NTRI). The segment at 464 to 488 (PAQSTSMGSGEQVMGPKYEPGDTSP) is disordered.

It localises to the nucleus. Transcriptional activator of gibberellin-dependent alpha-amylase expression in aleurone cells. Involved in pollen and floral organs development. May bind to the 5'-TAACAAA-3' box of alpha-amylase promoter. This chain is Transcription factor GAMYB (GAM1), found in Oryza sativa subsp. indica (Rice).